Consider the following 231-residue polypeptide: Nucleoside diphosphate kinase II, chloroplastic (231 aa).

A chloroplast-targeting transit peptide spans 1-62; that stretch reads MVGATVVSKW…RNSASRRRLR (62 aa). The ATP site is built by lysine 91, phenylalanine 139, arginine 167, threonine 173, arginine 184, and asparagine 194. The active-site Pros-phosphohistidine intermediate is histidine 197.

It belongs to the NDK family. In terms of assembly, interacts with PHYA, MPK3 and MPK6. The cofactor is Mg(2+). Autophosphorylated.

Its subcellular location is the plastid. It localises to the chloroplast. The catalysed reaction is a 2'-deoxyribonucleoside 5'-diphosphate + ATP = a 2'-deoxyribonucleoside 5'-triphosphate + ADP. It catalyses the reaction a ribonucleoside 5'-diphosphate + ATP = a ribonucleoside 5'-triphosphate + ADP. Functionally, major role in the synthesis of nucleoside triphosphates other than ATP. The ATP gamma phosphate is transferred to the NDP beta phosphate via a ping-pong mechanism, using a phosphorylated active-site intermediate. May activate MPK3 and MPK6. May be involved in the regulation of cellular redox state and hydrogen peroxide-mediated MAP kinase signaling. In Arabidopsis thaliana (Mouse-ear cress), this protein is Nucleoside diphosphate kinase II, chloroplastic (NDPK2).